The primary structure comprises 498 residues: Glycerol kinase (498 aa).

An ADP-binding site is contributed by T12. T12, T13, and S14 together coordinate ATP. T12 serves as a coordination point for sn-glycerol 3-phosphate. R16 is an ADP binding site. R82, E83, and Y134 together coordinate sn-glycerol 3-phosphate. Residues R82, E83, and Y134 each contribute to the glycerol site. H230 bears the Phosphohistidine; by HPr mark. D244 lines the sn-glycerol 3-phosphate pocket. Glycerol-binding residues include D244 and Q245. ADP contacts are provided by T266 and G309. Residues T266, G309, Q313, and G410 each contribute to the ATP site. G410 and N414 together coordinate ADP.

This sequence belongs to the FGGY kinase family. As to quaternary structure, homotetramer and homodimer (in equilibrium). In terms of processing, the phosphoenolpyruvate-dependent sugar phosphotransferase system (PTS), including enzyme I, and histidine-containing protein (HPr) are required for the phosphorylation, which leads to the activation of the enzyme.

The enzyme catalyses glycerol + ATP = sn-glycerol 3-phosphate + ADP + H(+). It functions in the pathway polyol metabolism; glycerol degradation via glycerol kinase pathway; sn-glycerol 3-phosphate from glycerol: step 1/1. With respect to regulation, activated by phosphorylation and inhibited by fructose 1,6-bisphosphate (FBP). Functionally, key enzyme in the regulation of glycerol uptake and metabolism. Catalyzes the phosphorylation of glycerol to yield sn-glycerol 3-phosphate. In Staphylococcus aureus (strain Mu50 / ATCC 700699), this protein is Glycerol kinase.